Here is a 194-residue protein sequence, read N- to C-terminus: Surfactant protein C (194 aa).

The segment at 1-21 is disordered; the sequence is MDMGSKEVLMESPPDYSTGPR. The propeptide occupies 1 to 23; that stretch reads MDMGSKEVLMESPPDYSTGPRSQ. Residues Cys28 and Cys29 are each lipidated (S-palmitoyl cysteine). Positions 59 to 194 are excised as a propeptide; it reads HMSQKHTEMV…LCGELPLYYI (136 aa). One can recognise a BRICHOS domain in the interval 95-194; it reads FSIGSTGIVL…LCGELPLYYI (100 aa). A disulfide bridge connects residues Cys122 and Cys186. Positions 149-170 are disordered; the sequence is SSTPTSKLGQEEGHSAGSDSDS.

Its subcellular location is the secreted. It is found in the extracellular space. The protein resides in the surface film. Its function is as follows. Pulmonary surfactant associated proteins promote alveolar stability by lowering the surface tension at the air-liquid interface in the peripheral air spaces. The sequence is that of Surfactant protein C from Rattus norvegicus (Rat).